Consider the following 396-residue polypeptide: S-adenosylmethionine synthase 1 (396 aa).

Residue glutamate 13 participates in Mg(2+) binding. Position 19 (histidine 19) interacts with ATP. Glutamate 47 serves as a coordination point for K(+). Glutamate 60 and glutamine 103 together coordinate L-methionine. Residues 171-173, 239-242, aspartate 250, 256-257, alanine 273, lysine 277, and lysine 281 contribute to the ATP site; these read DGK, SGRF, and RK. Aspartate 250 provides a ligand contact to L-methionine. L-methionine is bound at residue lysine 281.

The protein belongs to the AdoMet synthase family. In terms of assembly, homotetramer. Requires Mn(2+) as cofactor. Mg(2+) is required as a cofactor. Co(2+) serves as cofactor. It depends on K(+) as a cofactor.

The protein localises to the cytoplasm. It carries out the reaction L-methionine + ATP + H2O = S-adenosyl-L-methionine + phosphate + diphosphate. Its pathway is amino-acid biosynthesis; S-adenosyl-L-methionine biosynthesis; S-adenosyl-L-methionine from L-methionine: step 1/1. In terms of biological role, catalyzes the formation of S-adenosylmethionine from methionine and ATP. The reaction comprises two steps that are both catalyzed by the same enzyme: formation of S-adenosylmethionine (AdoMet) and triphosphate, and subsequent hydrolysis of the triphosphate. May be involved in the synthesis of betain in response to abiotic stress such as high salinity. The sequence is that of S-adenosylmethionine synthase 1 (SAMS1) from Beta vulgaris (Sugar beet).